Reading from the N-terminus, the 92-residue chain is RNA-binding protein Hfq (92 aa).

Positions 10 to 71 constitute a Sm domain; it reads DLFLNQLRKE…ISSIMPSKPI (62 aa). Residues 73-92 are disordered; that stretch reads YMAQAQNNQQASQQSNNNQG. The span at 75–92 shows a compositional bias: low complexity; that stretch reads AQAQNNQQASQQSNNNQG.

It belongs to the Hfq family. Homohexamer.

Functionally, RNA chaperone that binds small regulatory RNA (sRNAs) and mRNAs to facilitate mRNA translational regulation in response to envelope stress, environmental stress and changes in metabolite concentrations. Also binds with high specificity to tRNAs. The sequence is that of RNA-binding protein Hfq from Caldicellulosiruptor bescii (strain ATCC BAA-1888 / DSM 6725 / KCTC 15123 / Z-1320) (Anaerocellum thermophilum).